A 1090-amino-acid polypeptide reads, in one-letter code: DNA damage-binding protein 1 (1090 aa).

It belongs to the DDB1 family. As to quaternary structure, component of the UV-DDB complex, which is composed of DDB1 and DDB2. As to expression, expressed in proliferating tissues. Highly expressed in shoot apical meristem (SAM). Expressed in roots, young leaves, flag leaves, and panicles. Not detected in mature leaves.

It is found in the nucleus. Functionally, required for DNA repair. Binds to DDB2 to form the UV-damaged DNA-binding protein complex (the UV-DDB complex). The UV-DDB complex may recognize UV-induced DNA damage and recruit proteins of the nucleotide excision repair pathway (the NER pathway) to initiate DNA repair. May function as the substrate recognition module for a DCX (DDB1-CUL4-X-box) E3 ubiquitin-protein ligase complex. In Oryza sativa subsp. japonica (Rice), this protein is DNA damage-binding protein 1.